A 306-amino-acid polypeptide reads, in one-letter code: Pantothenate kinase (306 aa).

Residue 91–98 participates in ATP binding; that stretch reads GSVAVGKS.

The protein belongs to the prokaryotic pantothenate kinase family.

The protein localises to the cytoplasm. The enzyme catalyses (R)-pantothenate + ATP = (R)-4'-phosphopantothenate + ADP + H(+). The protein operates within cofactor biosynthesis; coenzyme A biosynthesis; CoA from (R)-pantothenate: step 1/5. This is Pantothenate kinase from Streptococcus suis (strain 05ZYH33).